Consider the following 121-residue polypeptide: MDYEFLRDITGVVKVRLSMGHEALGHWFNEEVKGNLALLDEVEAAARDVKGSERQWQKTGHEYTLWLDGEEVMVRANQLEFSGDEMEEGMSYYDEESLSLCGVEDFLQVVQAYRDFLAQYG.

The protein belongs to the UPF0231 family.

This is UPF0231 protein ESA_03214 from Cronobacter sakazakii (strain ATCC BAA-894) (Enterobacter sakazakii).